The primary structure comprises 258 residues: MTELKQSIQPIGIFFNAQYPSLEAICQRWGLVFDKEAAFELVFENNCLVLNKRDEPKLKGISVDFVSGAVAHRRKFGGGRGQSIAKAVGLKQGVNPSVVDGTAGLGRDAFVLASLGCNVTMVERNPVVAALLEDGLRRAYESEEIGDWMRERMRLVHGSSLESVAELGEEIDVVYLDPMYPHREKSALVKKEMRVFQSLVGADLDADGLLAPATALATKRVVVKRPDYAEDLDGVKPSMVISTKKNRFDVYVKAAMKA.

S-adenosyl-L-methionine is bound by residues 107–108 (RD), 123–124 (ER), 159–160 (SS), and aspartate 177.

This sequence belongs to the methyltransferase superfamily. RsmJ family.

The protein resides in the cytoplasm. The catalysed reaction is guanosine(1516) in 16S rRNA + S-adenosyl-L-methionine = N(2)-methylguanosine(1516) in 16S rRNA + S-adenosyl-L-homocysteine + H(+). Specifically methylates the guanosine in position 1516 of 16S rRNA. The protein is Ribosomal RNA small subunit methyltransferase J of Shewanella sediminis (strain HAW-EB3).